The chain runs to 176 residues: 2-C-methyl-D-erythritol 2,4-cyclodiphosphate synthase (176 aa).

Positions 23, 25, and 60 each coordinate a divalent metal cation. 23–25 serves as a coordination point for 4-CDP-2-C-methyl-D-erythritol 2-phosphate; it reads DSH. 149–152 contacts 4-CDP-2-C-methyl-D-erythritol 2-phosphate; the sequence is TSGE.

The protein belongs to the IspF family. Homotrimer. Requires a divalent metal cation as cofactor.

It carries out the reaction 4-CDP-2-C-methyl-D-erythritol 2-phosphate = 2-C-methyl-D-erythritol 2,4-cyclic diphosphate + CMP. It participates in isoprenoid biosynthesis; isopentenyl diphosphate biosynthesis via DXP pathway; isopentenyl diphosphate from 1-deoxy-D-xylulose 5-phosphate: step 4/6. Involved in the biosynthesis of isopentenyl diphosphate (IPP) and dimethylallyl diphosphate (DMAPP), two major building blocks of isoprenoid compounds. Catalyzes the conversion of 4-diphosphocytidyl-2-C-methyl-D-erythritol 2-phosphate (CDP-ME2P) to 2-C-methyl-D-erythritol 2,4-cyclodiphosphate (ME-CPP) with a corresponding release of cytidine 5-monophosphate (CMP). This chain is 2-C-methyl-D-erythritol 2,4-cyclodiphosphate synthase, found in Chlamydia caviae (strain ATCC VR-813 / DSM 19441 / 03DC25 / GPIC) (Chlamydophila caviae).